The chain runs to 359 residues: Fc receptor-like A (359 aa).

A signal peptide spans 1–27 (MKLGCVLMAWALYLSLGVLWVAQMLLA). Ig-like C2-type domains lie at 70–159 (PFHL…ETAS) and 170–257 (PAPI…PQLE). Intrachain disulfides connect Cys-99-Cys-143 and Cys-192-Cys-240. The tract at residues 259-313 (RVQGASSSAAPPTLNPAPQKSAAPGTAPEEAPGPLPPPPTPSSEDPGFSSPLGMP) is disordered. Low complexity predominate over residues 279–288 (SAAPGTAPEE). Residues 289 to 299 (APGPLPPPPTP) show a composition bias toward pro residues.

Monomer or homodimer; disulfide-linked. In terms of tissue distribution, expressed specifically in primary and secondary lymphoid tissues like lymph node, spleen and tonsil. Specifically expressed in B-cells with a high level in normal germinal center B-cells, centroblasts and in a subset of diffuse large B-cell lymphomas. Highly expressed in bone marrow B-cells and weakly in earlier B lineage cells. Expressed in pre-germinal and germinal center B-cells in secondary lymphoid tissues. Also expressed in melanoma and melanocytes.

The protein resides in the cytoplasm. Its function is as follows. May be implicated in B-cell differentiation and lymphomagenesis. The chain is Fc receptor-like A (FCRLA) from Homo sapiens (Human).